We begin with the raw amino-acid sequence, 174 residues long: Auxin-responsive protein IAA2 (174 aa).

Positions 16 to 20 (LCLGL) match the EAR-like (transcriptional repression) motif. The tract at residues 44-67 (FEETRDEEESTPPTKTQIVGWPPV) is disordered. Residues 77 to 164 (VSYVKVSMDG…SCKRLRIMKG (88 aa)) enclose the PB1 domain.

Belongs to the Aux/IAA family. In terms of assembly, homodimers and heterodimers. Interacts with the auxin-responsive protein IAA1. Interacts with TPL. As to expression, preferentially expressed in vegetative organs.

The protein resides in the nucleus. In terms of biological role, aux/IAA proteins are short-lived transcriptional factors that function as repressors of early auxin response genes at low auxin concentrations. Repression is thought to result from the interaction with auxin response factors (ARFs), proteins that bind to the auxin-responsive promoter element (AuxRE). Formation of heterodimers with ARF proteins may alter their ability to modulate early auxin response genes expression. The protein is Auxin-responsive protein IAA2 (IAA2) of Arabidopsis thaliana (Mouse-ear cress).